The chain runs to 382 residues: MHPDQIRQLRLQESSNTHPNLAILFIFIALAAVIVLLICLLSVILLLRYTRHGRILLKNTNPGELDDEALENEHIDEEGFSLLDDMGKERYLQAREFELNSMKSNVNTDAKLLDFLQVQEKGVLAWHFIPNQEYNCYVKNKTELSFLGNEECCMQTNLPLQRINEVYYFEVKLLDVPIDTLVSIGLATKPYPPFRLPGWNFWSTAYVSDGTRRSNSPFTGKPYSSFYQQGDVIGVGYKPKCNRIFFTRNGRRCAELPCTYRNLYPTVGAIGPCTLHVNLGQAGYVFIEANIKKWRLAPAVGSLAPPPSYSTSQPTISWDAASESSAGTTTQGDTNRPDKSKNRSPPINFDGTSYDAAGNVFSPSSSNNQAYQMHSMPATDEV.

A helical transmembrane segment spans residues L21–L41. The 206-residue stretch at G79–Y284 folds into the B30.2/SPRY domain. A disordered region spans residues A304–V382. Polar residues-rich tracts occupy residues Y309 to T334 and F361 to Q372.

It localises to the cytoplasm. Its subcellular location is the membrane. The polypeptide is SPRY domain-containing protein C285.10c (Schizosaccharomyces pombe (strain 972 / ATCC 24843) (Fission yeast)).